The following is a 132-amino-acid chain: Fluoride-specific ion channel FluC 1 (132 aa).

Helical transmembrane passes span 9–29 (LAAVFAGGALGSLARAALSAL), 35–55 (ASWPWPTFTVNIVGAFLVGYF), 72–89 (LLGTGFCGGLTTFSTMQV), and 100–120 (WGLAAGYTLTSIAAGLLAVHL). The Na(+) site is built by Gly-79 and Thr-82.

Belongs to the fluoride channel Fluc/FEX (TC 1.A.43) family.

The protein localises to the cell membrane. It catalyses the reaction fluoride(in) = fluoride(out). Na(+) is not transported, but it plays an essential structural role and its presence is essential for fluoride channel function. In terms of biological role, fluoride-specific ion channel. Important for reducing fluoride concentration in the cell, thus reducing its toxicity. The sequence is that of Fluoride-specific ion channel FluC 1 from Mycolicibacterium paratuberculosis (strain ATCC BAA-968 / K-10) (Mycobacterium paratuberculosis).